The primary structure comprises 747 residues: Cysteine--tRNA ligase, cytoplasmic (747 aa).

The interval 1–26 (MTESWEQGKGRRTQPPWSAPNTNEQP) is disordered. The segment covering 15 to 25 (PPWSAPNTNEQ) has biased composition (polar residues). Cysteine 54 contacts Zn(2+). Glycine 55 is an L-cysteine binding site. Positions 56–66 (PTVYDASHMGH) match the 'HIGH' region motif. Threonine 95 provides a ligand contact to L-cysteine. A 'KIIK' region motif is present at residues 100 to 103 (KIIK). Cysteine 347, histidine 372, and glutamate 376 together coordinate Zn(2+). Histidine 372 lines the L-cysteine pocket. Residues 405-409 (KMSKS) carry the 'KMSKS' region motif. Position 408 (lysine 408) interacts with ATP. Positions 651 to 683 (EEKRKAEEEKQRKKEEAARKKQQQEAAKLEKMK) are enriched in basic and acidic residues. Disordered stretches follow at residues 651-685 (EEKR…MKIS) and 700-721 (FDES…GQTK).

It belongs to the class-I aminoacyl-tRNA synthetase family. Homodimer. The cofactor is Zn(2+).

Its subcellular location is the cytoplasm. It catalyses the reaction tRNA(Cys) + L-cysteine + ATP = L-cysteinyl-tRNA(Cys) + AMP + diphosphate. In terms of biological role, catalyzes the ATP-dependent ligation of cysteine to tRNA(Cys). The chain is Cysteine--tRNA ligase, cytoplasmic (cars1) from Xenopus laevis (African clawed frog).